Consider the following 110-residue polypeptide: Large ribosomal subunit protein uL22 (110 aa).

The protein belongs to the universal ribosomal protein uL22 family. In terms of assembly, part of the 50S ribosomal subunit.

This protein binds specifically to 23S rRNA; its binding is stimulated by other ribosomal proteins, e.g. L4, L17, and L20. It is important during the early stages of 50S assembly. It makes multiple contacts with different domains of the 23S rRNA in the assembled 50S subunit and ribosome. In terms of biological role, the globular domain of the protein is located near the polypeptide exit tunnel on the outside of the subunit, while an extended beta-hairpin is found that lines the wall of the exit tunnel in the center of the 70S ribosome. In Janthinobacterium sp. (strain Marseille) (Minibacterium massiliensis), this protein is Large ribosomal subunit protein uL22.